The following is a 316-amino-acid chain: MHDWLNNLPKAELHLHLEGSLEPELMFRLAERNKIALPWNDVEALRSAYNFGNLQEFLDLYYAGADVLRTEQDFYDLTWAYLQKCEEQNVVHTEPFFDPQTHTDRGVPFEAALNGISAALADGRELLGISSGLILSFLRHLPEEEAFKTLEQALPYRNAFFAVGLDSSEVGHPPSKFQRVFDKARGEGLLTVAHAGEEGPPEYIWQALDLLKVSRIDHGVRAAEDPKLIARLIEEQIPLTVCPLSNTKLKVFADMRQHNILDLLEQGVKVTVNSDDPAYFGGYVTENFVALHESLGMTEAQARRLAQNSLDARLAY.

Zn(2+)-binding residues include His-14, His-16, and His-194. The active-site Proton donor is the Glu-197. Zn(2+) is bound at residue Asp-275. Residue Asp-276 coordinates substrate.

The protein belongs to the metallo-dependent hydrolases superfamily. Adenosine and AMP deaminases family. Adenine deaminase type 2 subfamily. It depends on Zn(2+) as a cofactor.

The enzyme catalyses adenine + H2O + H(+) = hypoxanthine + NH4(+). Functionally, catalyzes the hydrolytic deamination of adenine to hypoxanthine. Plays an important role in the purine salvage pathway and in nitrogen catabolism. The sequence is that of Adenine deaminase from Stutzerimonas stutzeri (strain A1501) (Pseudomonas stutzeri).